Here is a 757-residue protein sequence, read N- to C-terminus: Cellulose synthase-like protein B5 (757 aa).

2 helical membrane-spanning segments follow: residues 24–44 and 50–70; these read AVDLTILGLLYSLLLYRILHI and VWLLAFFCESCFSLVWLIFTC. Residues Asp136 and Asp460 contribute to the active site. 6 consecutive transmembrane segments (helical) span residues 531 to 551, 572 to 592, 613 to 633, 671 to 691, 704 to 724, and 735 to 755; these read LAYFWALMCLRSIPELIYCLL, IVTLVGMHCLYSLWQFMSLGF, LFSIQDIILKLLGISQIGFVI, LFIPGTFIMLVNLAALAGYLV, GSGLAEACGCILVVMLFLPFL, and IPLSTLSKAAFLTVLFVFFCV.

The protein belongs to the glycosyltransferase 2 family. Plant cellulose synthase-like B subfamily. As to expression, expressed in young seedlings, primarily in the vascular tissue. Expressed in the root cap.

Its subcellular location is the golgi apparatus membrane. Functionally, thought to be a Golgi-localized beta-glycan synthase that polymerize the backbones of noncellulosic polysaccharides (hemicelluloses) of plant cell wall. This Arabidopsis thaliana (Mouse-ear cress) protein is Cellulose synthase-like protein B5 (CSLB5).